The following is a 557-amino-acid chain: Fanconi anemia group C protein homolog (557 aa).

In terms of assembly, belongs to the multisubunit FA complex composed of FANCA, FANCB, FANCC, FANCE, FANCF, FANCG, FANCL/PHF9 and FANCM. This complex may also include HSP70. Interacts with ZBTB32. Upon IFNG induction, interacts with STAT1. Interacts with CDK1. Interacts with EIF2AK2.

The protein resides in the nucleus. The protein localises to the cytoplasm. Functionally, DNA repair protein that may operate in a postreplication repair or a cell cycle checkpoint function. May be implicated in interstrand DNA cross-link repair and in the maintenance of normal chromosome stability. Upon IFNG induction, may facilitate STAT1 activation by recruiting STAT1 to IFNGR1. This is Fanconi anemia group C protein homolog (Fancc) from Rattus norvegicus (Rat).